Here is a 343-residue protein sequence, read N- to C-terminus: Homeobox protein DBX1 (343 aa).

2 disordered regions span residues 56 to 100 and 240 to 343; these read RSVP…TAFS and KERE…ITVS. Residues 181–240 constitute a DNA-binding region (homeobox); the sequence is GMLRRAVFSDVQRKALEKMFQKQKYISKPDRKKLAAKLGLKDSQVKIWFQNRRMKWRNSK. A compositionally biased stretch (low complexity) spans 314 to 323; it reads AHSSSPGKPS. Residues 326–343 show a composition bias toward acidic residues; the sequence is SDSEEEEEGEEQEEITVS.

It belongs to the H2.0 homeobox family.

It is found in the nucleus. Could have a role in patterning the central nervous system during embryogenesis. Has a key role in regulating the distinct phenotypic features that distinguish two major classes of ventral interneurons, V0 and V1 neurons. Regulates the transcription factor profile, neurotransmitter phenotype, intraspinal migratory path and axonal trajectory of V0 neurons, features that differentiate them from an adjacent set of V1 neurons. The polypeptide is Homeobox protein DBX1 (DBX1) (Homo sapiens (Human)).